Here is a 246-residue protein sequence, read N- to C-terminus: Pyridoxine 5'-phosphate synthase (246 aa).

Positions 8 and 19 each coordinate 3-amino-2-oxopropyl phosphate. His44 serves as the catalytic Proton acceptor. Positions 46 and 51 each coordinate 1-deoxy-D-xylulose 5-phosphate. Catalysis depends on Glu76, which acts as the Proton acceptor. Thr106 contacts 1-deoxy-D-xylulose 5-phosphate. His198 (proton donor) is an active-site residue. Residues Asp199 and 221–222 (GH) each bind 3-amino-2-oxopropyl phosphate.

This sequence belongs to the PNP synthase family. In terms of assembly, homooctamer; tetramer of dimers.

It is found in the cytoplasm. It carries out the reaction 3-amino-2-oxopropyl phosphate + 1-deoxy-D-xylulose 5-phosphate = pyridoxine 5'-phosphate + phosphate + 2 H2O + H(+). It functions in the pathway cofactor biosynthesis; pyridoxine 5'-phosphate biosynthesis; pyridoxine 5'-phosphate from D-erythrose 4-phosphate: step 5/5. In terms of biological role, catalyzes the complicated ring closure reaction between the two acyclic compounds 1-deoxy-D-xylulose-5-phosphate (DXP) and 3-amino-2-oxopropyl phosphate (1-amino-acetone-3-phosphate or AAP) to form pyridoxine 5'-phosphate (PNP) and inorganic phosphate. The polypeptide is Pyridoxine 5'-phosphate synthase (Mesorhizobium japonicum (strain LMG 29417 / CECT 9101 / MAFF 303099) (Mesorhizobium loti (strain MAFF 303099))).